Here is a 37-residue protein sequence, read N- to C-terminus: MKVRASVKAICRNCKIIKRHGVVRVICSEPKHKQRQG.

The protein belongs to the bacterial ribosomal protein bL36 family.

In Aeromonas salmonicida (strain A449), this protein is Large ribosomal subunit protein bL36B.